The chain runs to 163 residues: Nucleotide-binding protein YajQ (163 aa).

It belongs to the YajQ family.

Nucleotide-binding protein. This Escherichia coli O81 (strain ED1a) protein is Nucleotide-binding protein YajQ.